Consider the following 926-residue polypeptide: Ubiquitin carboxyl-terminal hydrolase 4 (926 aa).

One can recognise a Rhodanese domain in the interval 205–328 (SQMEILLIDI…WLKSNYGRQV (124 aa)). Ser-443 bears the Phosphoserine mark. The region spanning 562 to 923 (VGLENLGNSC…NAYVLFYHRV (362 aa)) is the USP domain. Residue Cys-571 is the Nucleophile of the active site. Catalysis depends on His-880, which acts as the Proton acceptor.

This sequence belongs to the peptidase C19 family. Interacts with BRO1, RFU1 and VPS32. Associates with the 26S proteasome.

It localises to the cytoplasm. The protein localises to the late endosome membrane. It catalyses the reaction Thiol-dependent hydrolysis of ester, thioester, amide, peptide and isopeptide bonds formed by the C-terminal Gly of ubiquitin (a 76-residue protein attached to proteins as an intracellular targeting signal).. Its activity is regulated as follows. RFU1 is an inhibitor of deubiquitination activity. In terms of biological role, ubiquitin thioesterase that acts at the late endosome/prevacuolar compartment to recover ubiquitin from ubiquitinated membrane proteins en route to the vacuole. Also removes ubiquitin from soluble proteins targeted to proteasomes. Is essential to maintain a normal level of free ubiquitin. Involved in the ammonium-induced down-regulation of the GAP1 permease and the UME3 destruction in response to oxidative stress. Has a role in the RAD9 checkpoint response to TOP1 poisons. Required for promoting coordination of DNA replication and avoids DNA overreplication. In Saccharomyces cerevisiae (strain RM11-1a) (Baker's yeast), this protein is Ubiquitin carboxyl-terminal hydrolase 4 (DOA4).